The chain runs to 174 residues: NADH-ubiquinone oxidoreductase chain 6 (174 aa).

The next 6 membrane-spanning stretches (helical) occupy residues 1–21, 24–44, 47–67, 86–106, 111–131, and 151–171; these read MTYA…GFSS, SPIY…AVIL, GGGY…MVVF, VEVL…VLWV, GVVV…EGEG, and WLVV…IEIA.

It belongs to the complex I subunit 6 family. In terms of assembly, core subunit of respiratory chain NADH dehydrogenase (Complex I) which is composed of 45 different subunits.

The protein localises to the mitochondrion inner membrane. It carries out the reaction a ubiquinone + NADH + 5 H(+)(in) = a ubiquinol + NAD(+) + 4 H(+)(out). Functionally, core subunit of the mitochondrial membrane respiratory chain NADH dehydrogenase (Complex I) which catalyzes electron transfer from NADH through the respiratory chain, using ubiquinone as an electron acceptor. Essential for the catalytic activity and assembly of complex I. The polypeptide is NADH-ubiquinone oxidoreductase chain 6 (MT-ND6) (Pongo abelii (Sumatran orangutan)).